A 234-amino-acid polypeptide reads, in one-letter code: Purine nucleoside phosphorylase DeoD-type (234 aa).

Histidine 4 is a binding site for a purine D-ribonucleoside. Phosphate-binding positions include glycine 20, arginine 24, arginine 43, and 87-90 (RVGT). Residues glutamate 162, 178 to 180 (EME), and 202 to 203 (SD) contribute to the a purine D-ribonucleoside site. Catalysis depends on aspartate 203, which acts as the Proton donor.

Belongs to the PNP/UDP phosphorylase family. As to quaternary structure, homohexamer; trimer of homodimers.

The enzyme catalyses a purine D-ribonucleoside + phosphate = a purine nucleobase + alpha-D-ribose 1-phosphate. The catalysed reaction is a purine 2'-deoxy-D-ribonucleoside + phosphate = a purine nucleobase + 2-deoxy-alpha-D-ribose 1-phosphate. Its function is as follows. Catalyzes the reversible phosphorolytic breakdown of the N-glycosidic bond in the beta-(deoxy)ribonucleoside molecules, with the formation of the corresponding free purine bases and pentose-1-phosphate. Cleavage of adenosine and its derivatives. In Geobacillus stearothermophilus (Bacillus stearothermophilus), this protein is Purine nucleoside phosphorylase DeoD-type.